The chain runs to 563 residues: Sulfite reductase [NADPH] hemoprotein beta-component (563 aa).

Positions 426, 432, 472, and 476 each coordinate [4Fe-4S] cluster. A siroheme-binding site is contributed by C476.

Belongs to the nitrite and sulfite reductase 4Fe-4S domain family. In terms of assembly, alpha(8)-beta(8). The alpha component is a flavoprotein, the beta component is a hemoprotein. It depends on siroheme as a cofactor. Requires [4Fe-4S] cluster as cofactor.

The catalysed reaction is hydrogen sulfide + 3 NADP(+) + 3 H2O = sulfite + 3 NADPH + 4 H(+). The protein operates within sulfur metabolism; hydrogen sulfide biosynthesis; hydrogen sulfide from sulfite (NADPH route): step 1/1. Component of the sulfite reductase complex that catalyzes the 6-electron reduction of sulfite to sulfide. This is one of several activities required for the biosynthesis of L-cysteine from sulfate. The sequence is that of Sulfite reductase [NADPH] hemoprotein beta-component from Photobacterium profundum (strain SS9).